The sequence spans 213 residues: MKNLWNIFKKGLIAENPIFVLALSLCPALATTSTAVNGFTMGICVLFVITCNNTVVSIIKNVVNPKVRVPVYITCIATIVTVVELVMQAYAPLLYKQLGIYLALVVVFAIILARAETFASKNPVVPSFFDGLGMGCGFTLALTIIGMIRELFGSGAIFGVNVFGASYNPALIMILPPGGFILIGYLVAIVKVYNQHMEKIKMQKLEKANGGEA.

6 helical membrane-spanning segments follow: residues 11–31 (GLIA…ALAT), 39–59 (FTMG…VSII), 69–89 (VPVY…VMQA), 93–113 (LLYK…IILA), 128–148 (FFDG…IGMI), and 170–190 (ALIM…VAIV).

This sequence belongs to the NqrDE/RnfAE family. As to quaternary structure, the complex is composed of six subunits: RnfA, RnfB, RnfC, RnfD, RnfE and RnfG.

It localises to the cell membrane. Part of a membrane-bound complex that couples electron transfer with translocation of ions across the membrane. Couples electron transfer from reduced ferredoxin to NAD(+) with translocation of H(+) out of the cell. Essential for energy conservation during autotrophic growth. Contributes to ATP synthesis during heterotrophic growth. The sequence is that of Proton-translocating ferredoxin:NAD(+) oxidoreductase complex subunit E from Clostridium ljungdahlii (strain ATCC 55383 / DSM 13528 / PETC).